Consider the following 320-residue polypeptide: GTP 3',8-cyclase (320 aa).

Residues 4 to 227 (LYSRRINYMR…METEKSSPAK (224 aa)) form the Radical SAM core domain. GTP is bound at residue R13. [4Fe-4S] cluster contacts are provided by C20 and C24. Y26 contributes to the S-adenosyl-L-methionine binding site. A [4Fe-4S] cluster-binding site is contributed by C27. Residue R63 coordinates GTP. G67 contacts S-adenosyl-L-methionine. T94 contributes to the GTP binding site. S118 provides a ligand contact to S-adenosyl-L-methionine. GTP is bound at residue K155. Residue M189 coordinates S-adenosyl-L-methionine. The [4Fe-4S] cluster site is built by C249 and C252. 254 to 256 (RVR) contacts GTP. C266 contributes to the [4Fe-4S] cluster binding site. The segment covering 300-312 (KHDLLTDSHEESN) has biased composition (basic and acidic residues). The interval 300–320 (KHDLLTDSHEESNRGMSQIGG) is disordered.

Belongs to the radical SAM superfamily. MoaA family. Monomer and homodimer. [4Fe-4S] cluster serves as cofactor.

The catalysed reaction is GTP + AH2 + S-adenosyl-L-methionine = (8S)-3',8-cyclo-7,8-dihydroguanosine 5'-triphosphate + 5'-deoxyadenosine + L-methionine + A + H(+). It functions in the pathway cofactor biosynthesis; molybdopterin biosynthesis. Catalyzes the cyclization of GTP to (8S)-3',8-cyclo-7,8-dihydroguanosine 5'-triphosphate. The protein is GTP 3',8-cyclase of Alkaliphilus oremlandii (strain OhILAs) (Clostridium oremlandii (strain OhILAs)).